A 224-amino-acid chain; its full sequence is Putative MgpC-like protein MPN_150 (224 aa).

It belongs to the MgpC family.

In Mycoplasma pneumoniae (strain ATCC 29342 / M129 / Subtype 1) (Mycoplasmoides pneumoniae), this protein is Putative MgpC-like protein MPN_150.